Consider the following 418-residue polypeptide: Glutamyl-tRNA reductase (418 aa).

Residues 49–52 (TCNR), Ser-109, 114–116 (EPQ), and Gln-120 contribute to the substrate site. Cys-50 functions as the Nucleophile in the catalytic mechanism. Residue 189-194 (GAGETI) participates in NADP(+) binding.

Belongs to the glutamyl-tRNA reductase family. In terms of assembly, homodimer.

It catalyses the reaction (S)-4-amino-5-oxopentanoate + tRNA(Glu) + NADP(+) = L-glutamyl-tRNA(Glu) + NADPH + H(+). It functions in the pathway porphyrin-containing compound metabolism; protoporphyrin-IX biosynthesis; 5-aminolevulinate from L-glutamyl-tRNA(Glu): step 1/2. Functionally, catalyzes the NADPH-dependent reduction of glutamyl-tRNA(Glu) to glutamate 1-semialdehyde (GSA). In Escherichia coli O139:H28 (strain E24377A / ETEC), this protein is Glutamyl-tRNA reductase.